The chain runs to 514 residues: 2,3-bisphosphoglycerate-independent phosphoglycerate mutase (514 aa).

Positions 14 and 64 each coordinate Mn(2+). The active-site Phosphoserine intermediate is S64. Substrate is bound by residues H125, 155-156 (RD), R187, R193, 263-266 (RADR), and K336. D403, H407, D444, H445, and H463 together coordinate Mn(2+).

The protein belongs to the BPG-independent phosphoglycerate mutase family. Monomer. Requires Mn(2+) as cofactor.

It catalyses the reaction (2R)-2-phosphoglycerate = (2R)-3-phosphoglycerate. It participates in carbohydrate degradation; glycolysis; pyruvate from D-glyceraldehyde 3-phosphate: step 3/5. Its function is as follows. Catalyzes the interconversion of 2-phosphoglycerate and 3-phosphoglycerate. The chain is 2,3-bisphosphoglycerate-independent phosphoglycerate mutase from Shewanella sp. (strain ANA-3).